The sequence spans 329 residues: Biotin synthase (329 aa).

A Radical SAM core domain is found at 48-278 (FLGNGVDLCS…TKKIAVCGGR (231 aa)). Positions 66, 70, and 73 each coordinate [4Fe-4S] cluster. Positions 143 and 203 each coordinate [2Fe-2S] cluster.

The protein belongs to the radical SAM superfamily. Biotin synthase family. Homodimer. [4Fe-4S] cluster serves as cofactor. Requires [2Fe-2S] cluster as cofactor.

The catalysed reaction is (4R,5S)-dethiobiotin + (sulfur carrier)-SH + 2 reduced [2Fe-2S]-[ferredoxin] + 2 S-adenosyl-L-methionine = (sulfur carrier)-H + biotin + 2 5'-deoxyadenosine + 2 L-methionine + 2 oxidized [2Fe-2S]-[ferredoxin]. It participates in cofactor biosynthesis; biotin biosynthesis; biotin from 7,8-diaminononanoate: step 2/2. Its function is as follows. Catalyzes the conversion of dethiobiotin (DTB) to biotin by the insertion of a sulfur atom into dethiobiotin via a radical-based mechanism. This is Biotin synthase from Geobacter metallireducens (strain ATCC 53774 / DSM 7210 / GS-15).